The following is a 271-amino-acid chain: Indole-3-glycerol phosphate synthase (271 aa).

The protein belongs to the TrpC family.

It catalyses the reaction 1-(2-carboxyphenylamino)-1-deoxy-D-ribulose 5-phosphate + H(+) = (1S,2R)-1-C-(indol-3-yl)glycerol 3-phosphate + CO2 + H2O. Its pathway is amino-acid biosynthesis; L-tryptophan biosynthesis; L-tryptophan from chorismate: step 4/5. In Haloarcula marismortui (strain ATCC 43049 / DSM 3752 / JCM 8966 / VKM B-1809) (Halobacterium marismortui), this protein is Indole-3-glycerol phosphate synthase.